We begin with the raw amino-acid sequence, 158 residues long: SsrA-binding protein (158 aa).

It belongs to the SmpB family.

It localises to the cytoplasm. Required for rescue of stalled ribosomes mediated by trans-translation. Binds to transfer-messenger RNA (tmRNA), required for stable association of tmRNA with ribosomes. tmRNA and SmpB together mimic tRNA shape, replacing the anticodon stem-loop with SmpB. tmRNA is encoded by the ssrA gene; the 2 termini fold to resemble tRNA(Ala) and it encodes a 'tag peptide', a short internal open reading frame. During trans-translation Ala-aminoacylated tmRNA acts like a tRNA, entering the A-site of stalled ribosomes, displacing the stalled mRNA. The ribosome then switches to translate the ORF on the tmRNA; the nascent peptide is terminated with the 'tag peptide' encoded by the tmRNA and targeted for degradation. The ribosome is freed to recommence translation, which seems to be the essential function of trans-translation. The sequence is that of SsrA-binding protein from Buchnera aphidicola subsp. Baizongia pistaciae (strain Bp).